The primary structure comprises 562 residues: Lamassu protein LmuB (562 aa).

Functionally, component of antiviral defense system Lamassu type I, composed of LmuA and LmuB. Expression of Lamassu type I in B.subtilis (strain BEST7003) confers resistance to phages phi3T, SpBeta and SPR. May be an ATPase. This chain is Lamassu protein LmuB, found in Bacillus sp. (strain NCIM 5461 / CCTCC AB 2011126 / NIO-1130).